The sequence spans 1361 residues: MASASQFLLEDQTDEDFFDKLVDDAYSPTEAQASSSVTELKFDDESDSDDIRAFSNLSIGKDPLGGGDGTLNEAILGNDVANEGASGSVGEDEPSSIAPEAVQFPHSDARELRDDEMRSEVADMPLSETAKECTIVNEPGIPGVKELDWGSFDADLSVNDGRGFGSYSDFFTELDATAGNLQGKADVAVATGGNLVANDTNNTSVGFEQHQGQLHHDSASGQYVDNSQSWENLYPGWKYDASTGQWFQVDGHDASMNSQESYENSTSNWENVAANNSDVAYQRQSTASAVAGTVENVSTWNQVSQVSNGYPEHMVFDSQYPGWYYDTIAQEWRSLDSYNQAFQTTGQANDQQVQNGNSFTAVDHSRESNVHDVYDKNQILRTQKFDIQSQHGSWDQSYYDKNQQATNMWQPENAGAAEAAVTPASLSNSGGNQQVNNLYSTGPVAEQFKPYESGVQSFIPQHMNVANVTQNGPMSFSNGFYSRQESVDDAPQSFQSSQLFSPSAGRSSDGRPPHALVNFGFGGKLILMKDDSGSLQNSSFGSQKGTGGSSISVLNLAEVISGSASYSSLGENSLSYFSCLDQQSLPGPLVGGNVGSKDLHKWLDERILNCESSYMDFSRGKLLKMLLSLLRISCQYYGKLRSPFGSDALQKETDSAEAAVAKLFAIAKEDGVQNGYAPISQCLQHLPPESQMQVTASEVQNLLASGRKMEALQCAQEGHLWGPALVIAAQLGQQFYVDTVKQMALRQLVPGSPLRTLCLLVAGQPAEVFSTGSTSDISFPGSVNLPPQQPQFGCSSMLDSWEENLGIITANRTTDDELVITHLGDCMWKERGEIIAAHICYLIADKNFDTYSDTARLCLVGADHWKYPRTYASPEAIQRTELYEYSKTLGNSQYTLLTFQPYKVMYAHMLAEVGKLSTAQKYCQAVLKCLKTGRSPEVEMWKQFVSSLEERIRIHQQGGYTANLHPEKLVGVLLNFFGSKTHRPVGGMPPPAPHSTKGNLQGNEYQHQQQEATKLAYSQSVNTMSSLMPPASVEPTHESGGSGRRMAVHTRSVSEPDFGRTPIQEMADSSKEKAVDGVTKLKSSGSVAGSRFSRFGFGIFKDTVGRVLARSSKEAKLGAENQFYYDDKLKRWVERGVEPPAEEAALPPPPTIGAFQNNSLGYENKSDMIPSNGNWSSGGPTPSENSSGIPPISHGSNQFSARGRTGVRARYVDTYNPPGRGNSHTMIPSPSVQTAKPPIPAKAKFFVPAAPASFSNDQAMEPAAAETRQEEISADEVVASSGAPPPMMMQRYPSMDNIQRNGLGISVNGDNHQPPTSRRTASWSGNFNTSFTPPTSPSTFKPVLLNSSSSSLGEELQEVEL.

At Ser46 the chain carries Phosphoserine. Disordered regions lie at residues 82-109, 487-513, 984-1013, 1025-1062, 1163-1204, 1216-1235, and 1306-1361; these read NEGASGSVGEDEPSSIAPEAVQFPHSDA, VDDAPQSFQSSQLFSPSAGRSSDGRPP, PVGGMPPPAPHSTKGNLQGNEYQHQQQEAT, SSLMPPASVEPTHESGGSGRRMAVHTRSVSEPDFGRTP, ENKS…ARGR, NPPGRGNSHTMIPSPSVQTA, and SVNG…EVEL. A compositionally biased stretch (low complexity) spans 491–503; it reads PQSFQSSQLFSPS. Residues 996–1013 are compositionally biased toward polar residues; it reads TKGNLQGNEYQHQQQEAT. 3 stretches are compositionally biased toward polar residues: residues 1169–1200, 1222–1234, and 1308–1325; these read IPSNGNWSSGGPTPSENSSGIPPISHGSNQFS, NSHTMIPSPSVQT, and NGDNHQPPTSRRTASWSG. A compositionally biased stretch (low complexity) spans 1326 to 1354; that stretch reads NFNTSFTPPTSPSTFKPVLLNSSSSSLGE.

This sequence belongs to the SEC16 family.

Its subcellular location is the golgi apparatus. It is found in the endoplasmic reticulum. Required for protein transport from the endoplasmic reticulum to the Golgi apparatus. The protein is Protein transport protein SEC16B homolog of Arabidopsis thaliana (Mouse-ear cress).